The chain runs to 396 residues: Elongation factor Tu (396 aa).

The 195-residue stretch at 11–205 (KPHVNIGTIG…TVDEYIPTPE (195 aa)) folds into the tr-type G domain. The G1 stretch occupies residues 20–27 (GHVDHGKT). Position 20–27 (20–27 (GHVDHGKT)) interacts with GTP. Residue Thr27 participates in Mg(2+) binding. A G2 region spans residues 61-65 (GITIN). The tract at residues 82–85 (DAPG) is G3. Residues 82–86 (DAPGH) and 137–140 (NKVD) each bind GTP. The G4 stretch occupies residues 137–140 (NKVD). The interval 175–177 (SAL) is G5.

The protein belongs to the TRAFAC class translation factor GTPase superfamily. Classic translation factor GTPase family. EF-Tu/EF-1A subfamily. In terms of assembly, monomer.

The protein localises to the cytoplasm. It carries out the reaction GTP + H2O = GDP + phosphate + H(+). GTP hydrolase that promotes the GTP-dependent binding of aminoacyl-tRNA to the A-site of ribosomes during protein biosynthesis. The chain is Elongation factor Tu from Lactobacillus johnsonii (strain CNCM I-12250 / La1 / NCC 533).